The sequence spans 257 residues: Gamma-secretase subunit APH-1B (257 aa).

A run of 7 helical transmembrane segments spans residues 5 to 25 (VFFG…VFTI), 32 to 52 (IIFL…SSLV), 70 to 90 (YLLI…RFAY), 115 to 135 (LLAY…SFVN), 158 to 178 (YSAF…IVFF), 186 to 206 (WGIL…TFIS), and 213 to 233 (LASA…AAGG).

The protein belongs to the APH-1 family. As to quaternary structure, probable component of the gamma-secretase complex, a complex composed of a presenilin homodimer (PSEN1 or PSEN2), nicastrin (NCSTN), APH1 (APH1A or APH1B) and PEN2. Such minimal complex is sufficient for secretase activity, although other components may exist. Interacts with PSEN1 and PSEN2.

It localises to the membrane. Functionally, probable subunit of the gamma-secretase complex, an endoprotease complex that catalyzes the intramembrane cleavage of integral proteins such as Notch receptors and APP (amyloid-beta precursor protein). It probably represents a stabilizing cofactor for the presenilin homodimer that promotes the formation of a stable complex. Probably present in a minority of gamma-secretase complexes compared to APH1A. The chain is Gamma-secretase subunit APH-1B (APH1B) from Pongo abelii (Sumatran orangutan).